The following is a 548-amino-acid chain: NAD(P)H-quinone oxidoreductase chain 4 (548 aa).

Transmembrane regions (helical) follow at residues 17–37 (VPWL…IPFI), 48–68 (WYAL…YLTG), 103–123 (LILL…PVTF), 127–147 (LFFF…AVQD), 149–169 (LLFF…LAIW), 181–201 (FILY…AMGF), 222–242 (GFQL…LPIV), 256–276 (TAPV…YALL), 290–310 (FAPL…LTSF), 327–347 (MGFV…GAML), 348–368 (QMIS…ATYD), 389–409 (FALW…SGFV), 430–450 (VVIC…LLSM), and 477–497 (VYII…PRLM).

The protein belongs to the complex I subunit 4 family.

It localises to the cellular thylakoid membrane. It catalyses the reaction a plastoquinone + NADH + (n+1) H(+)(in) = a plastoquinol + NAD(+) + n H(+)(out). The catalysed reaction is a plastoquinone + NADPH + (n+1) H(+)(in) = a plastoquinol + NADP(+) + n H(+)(out). Functionally, NDH-1 shuttles electrons from NAD(P)H, via FMN and iron-sulfur (Fe-S) centers, to quinones in the respiratory chain. The immediate electron acceptor for the enzyme in this species is believed to be plastoquinone. Couples the redox reaction to proton translocation (for every two electrons transferred, four hydrogen ions are translocated across the cytoplasmic membrane), and thus conserves the redox energy in a proton gradient. This chain is NAD(P)H-quinone oxidoreductase chain 4, found in Synechococcus sp. (strain CC9902).